Consider the following 452-residue polypeptide: Solute carrier family 52, riboflavin transporter, member 3-B (452 aa).

Helical transmembrane passes span 11–31 (LFGIGSWVAINGMWVELPLIV), 38–58 (WLLPSYLTIIIQMANIGPLFI), 73–93 (PVIYTIVAVGVVATFLLAFLW), 111–131 (LSFLLSVVDCTSSVTFLPFMM), and 138–158 (LTTYFIGEGLSGLVPALVALV). Asn168, Asn174, Asn179, and Asn193 each carry an N-linked (GlcNAc...) asparagine glycan. A run of 6 helical transmembrane segments spans residues 199–219 (FFLFLSAMMMVCLGAFLLLNL), 285–305 (VFIFVVLAWVNALTNAVLPSV), 321–341 (AATLSSVANPVACFIAMFVPI), 344–364 (LVLMGVLTVTGTGFGAYIMAM), 381–401 (ALIVITWVIFVLSLSYVKVII), and 412–432 (ALVWCGAVVQLGSMLGALSMF).

It belongs to the riboflavin transporter family.

It localises to the cell membrane. It catalyses the reaction riboflavin(in) = riboflavin(out). Plasma membrane transporter mediating the uptake by cells of the water soluble vitamin B2/riboflavin that plays a key role in biochemical oxidation-reduction reactions of the carbohydrate, lipid, and amino acid metabolism. This is Solute carrier family 52, riboflavin transporter, member 3-B (slc52a3b) from Danio rerio (Zebrafish).